The primary structure comprises 476 residues: Bifunctional protein HldE (476 aa).

The tract at residues 1 to 318 (MKVTLPEFER…ENAVRGRADT (318 aa)) is ribokinase. 195–198 (NLSE) is an ATP binding site. Asp264 is an active-site residue. The interval 344-476 (MTNGVFDILH…IIKKIQKDSQ (133 aa)) is cytidylyltransferase.

It in the N-terminal section; belongs to the carbohydrate kinase PfkB family. In the C-terminal section; belongs to the cytidylyltransferase family. In terms of assembly, homodimer.

It catalyses the reaction D-glycero-beta-D-manno-heptose 7-phosphate + ATP = D-glycero-beta-D-manno-heptose 1,7-bisphosphate + ADP + H(+). The catalysed reaction is D-glycero-beta-D-manno-heptose 1-phosphate + ATP + H(+) = ADP-D-glycero-beta-D-manno-heptose + diphosphate. The protein operates within nucleotide-sugar biosynthesis; ADP-L-glycero-beta-D-manno-heptose biosynthesis; ADP-L-glycero-beta-D-manno-heptose from D-glycero-beta-D-manno-heptose 7-phosphate: step 1/4. Its pathway is nucleotide-sugar biosynthesis; ADP-L-glycero-beta-D-manno-heptose biosynthesis; ADP-L-glycero-beta-D-manno-heptose from D-glycero-beta-D-manno-heptose 7-phosphate: step 3/4. Its function is as follows. Catalyzes the phosphorylation of D-glycero-D-manno-heptose 7-phosphate at the C-1 position to selectively form D-glycero-beta-D-manno-heptose-1,7-bisphosphate. Catalyzes the ADP transfer from ATP to D-glycero-beta-D-manno-heptose 1-phosphate, yielding ADP-D-glycero-beta-D-manno-heptose. This is Bifunctional protein HldE from Enterobacter sp. (strain 638).